The chain runs to 140 residues: Putative pre-16S rRNA nuclease (140 aa).

Belongs to the YqgF nuclease family.

Its subcellular location is the cytoplasm. Functionally, could be a nuclease involved in processing of the 5'-end of pre-16S rRNA. In Actinobacillus succinogenes (strain ATCC 55618 / DSM 22257 / CCUG 43843 / 130Z), this protein is Putative pre-16S rRNA nuclease.